We begin with the raw amino-acid sequence, 454 residues long: Probable tRNA methyltransferase 9B (454 aa).

Ser214 is modified (phosphoserine).

This sequence belongs to the methyltransferase superfamily. Down-regulated in breast, bladder, colorectal, cervix and testicular carcinomas.

May modify wobble uridines in specific arginine and glutamic acid tRNAs. Acts as a tumor suppressor by promoting the expression of LIN9. This chain is Probable tRNA methyltransferase 9B, found in Homo sapiens (Human).